Consider the following 304-residue polypeptide: Murein tetrapeptide carboxypeptidase (304 aa).

Catalysis depends on Ser106, which acts as the Nucleophile. Active-site charge relay system residues include Glu200 and His270.

This sequence belongs to the peptidase S66 family.

It localises to the cytoplasm. The catalysed reaction is N-acetyl-D-glucosaminyl-N-acetylmuramoyl-L-alanyl-meso-2,6-diaminoheptanedioyl-D-alanine + H2O = N-acetyl-D-glucosaminyl-N-acetylmuramoyl-L-alanyl-meso-2,6-diaminoheptanedioate + D-alanine. The protein operates within cell wall biogenesis; peptidoglycan recycling. Releases the terminal D-alanine residue from the cytoplasmic tetrapeptide recycling product L-Ala-gamma-D-Glu-meso-Dap-D-Ala. Can also cleave D-Ala from murein derivatives containing the tetrapeptide, i.e. MurNAc-tetrapeptide, UDP-MurNAc-tetrapeptide, GlcNAc-MurNAc-tetrapeptide, and GlcNAc-anhMurNAc-tetrapeptide. Does not act on murein sacculi or cross-linked muropeptides. The tripeptides produced by the LcdA reaction can then be reused as peptidoglycan building blocks; LcdA is thereby involved in murein recycling. The protein is Murein tetrapeptide carboxypeptidase (ldcA) of Escherichia coli O157:H7.